A 393-amino-acid chain; its full sequence is NAD(P)H-quinone oxidoreductase subunit H, chloroplastic (393 aa).

Belongs to the complex I 49 kDa subunit family. NDH is composed of at least 16 different subunits, 5 of which are encoded in the nucleus.

The protein resides in the plastid. Its subcellular location is the chloroplast thylakoid membrane. It carries out the reaction a plastoquinone + NADH + (n+1) H(+)(in) = a plastoquinol + NAD(+) + n H(+)(out). It catalyses the reaction a plastoquinone + NADPH + (n+1) H(+)(in) = a plastoquinol + NADP(+) + n H(+)(out). In terms of biological role, NDH shuttles electrons from NAD(P)H:plastoquinone, via FMN and iron-sulfur (Fe-S) centers, to quinones in the photosynthetic chain and possibly in a chloroplast respiratory chain. The immediate electron acceptor for the enzyme in this species is believed to be plastoquinone. Couples the redox reaction to proton translocation, and thus conserves the redox energy in a proton gradient. This is NAD(P)H-quinone oxidoreductase subunit H, chloroplastic from Platanus occidentalis (Sycamore).